Reading from the N-terminus, the 86-residue chain is Large ribosomal subunit protein eL43 (86 aa).

A C4-type zinc finger spans residues 38-59 (CPVCGRKAVRRISTGIWQCQKC).

The protein belongs to the eukaryotic ribosomal protein eL43 family. Zn(2+) is required as a cofactor.

This is Large ribosomal subunit protein eL43 from Thermococcus onnurineus (strain NA1).